The following is a 302-amino-acid chain: Glutamate/aspartate import solute-binding protein (302 aa).

Residues 1–22 form the signal peptide; sequence MQLRKPATAILALALSAGLAQA.

This sequence belongs to the bacterial solute-binding protein 3 family. As to quaternary structure, the complex is composed of two ATP-binding proteins (GltL), two transmembrane proteins (GltJ and GltK) and a solute-binding protein (GltI).

The protein localises to the periplasm. In terms of biological role, part of the ABC transporter complex GltIJKL involved in glutamate and aspartate uptake. Binds to both glutamate and aspartate. The chain is Glutamate/aspartate import solute-binding protein (gltI) from Escherichia coli (strain K12).